The following is a 344-amino-acid chain: Phenylalanine--tRNA ligase alpha subunit (344 aa).

Position 256 (glutamate 256) interacts with Mg(2+).

Belongs to the class-II aminoacyl-tRNA synthetase family. Phe-tRNA synthetase alpha subunit type 1 subfamily. As to quaternary structure, tetramer of two alpha and two beta subunits. Requires Mg(2+) as cofactor.

Its subcellular location is the cytoplasm. It catalyses the reaction tRNA(Phe) + L-phenylalanine + ATP = L-phenylalanyl-tRNA(Phe) + AMP + diphosphate + H(+). The chain is Phenylalanine--tRNA ligase alpha subunit from Bacillus cereus (strain G9842).